The following is a 293-amino-acid chain: HTH-type transcriptional regulator HdfR (293 aa).

The HTH lysR-type domain maps to 1-58 (MDTELLKTFLEVSRTRHFGRAAESLYLTQSAVSFRIRQLENQLGANLFTRHRNNIRLT). The segment at residues 18 to 37 (FGRAAESLYLTQSAVSFRIR) is a DNA-binding region (H-T-H motif).

Belongs to the LysR transcriptional regulatory family.

Negatively regulates the transcription of the flagellar master operon flhDC by binding to the upstream region of the operon. The sequence is that of HTH-type transcriptional regulator HdfR from Yersinia enterocolitica serotype O:8 / biotype 1B (strain NCTC 13174 / 8081).